The following is a 1569-amino-acid chain: Pentafunctional AROM polypeptide (1569 aa).

The interval M1–D382 is 3-dehydroquinate synthase. NAD(+) contacts are provided by residues D49 to N51, E84 to K87, G115 to V117, and D120. A 7-phospho-2-dehydro-3-deoxy-D-arabino-heptonate-binding site is contributed by R131. Residue T140–T141 coordinates NAD(+). The 7-phospho-2-dehydro-3-deoxy-D-arabino-heptonate site is built by D147 and K153. An NAD(+)-binding site is contributed by K162. N163 lines the 7-phospho-2-dehydro-3-deoxy-D-arabino-heptonate pocket. NAD(+)-binding positions include F180–T183 and N191. E195 provides a ligand contact to Zn(2+). Residues E195–K198 and K248 each bind 7-phospho-2-dehydro-3-deoxy-D-arabino-heptonate. E258 (proton acceptor; for 3-dehydroquinate synthase activity) is an active-site residue. Residues R262–N266 and H269 contribute to the 7-phospho-2-dehydro-3-deoxy-D-arabino-heptonate site. A Zn(2+)-binding site is contributed by H269. H273 functions as the Proton acceptor; for 3-dehydroquinate synthase activity in the catalytic mechanism. 7-phospho-2-dehydro-3-deoxy-D-arabino-heptonate contacts are provided by H285 and K354. H285 contributes to the Zn(2+) binding site. The segment at V395–V837 is EPSP synthase. C819 serves as the catalytic For EPSP synthase activity. Residues E859–S1053 are shikimate kinase. G866–T873 is an ATP binding site. The tract at residues L1054–E1267 is 3-dehydroquinase. Residue H1170 is the Proton acceptor; for 3-dehydroquinate dehydratase activity of the active site. Catalysis depends on K1198, which acts as the Schiff-base intermediate with substrate; for 3-dehydroquinate dehydratase activity. A shikimate dehydrogenase region spans residues P1280–L1569.

The protein in the N-terminal section; belongs to the sugar phosphate cyclases superfamily. Dehydroquinate synthase family. In the 2nd section; belongs to the EPSP synthase family. It in the 3rd section; belongs to the shikimate kinase family. This sequence in the 4th section; belongs to the type-I 3-dehydroquinase family. The protein in the C-terminal section; belongs to the shikimate dehydrogenase family. Homodimer. Requires Zn(2+) as cofactor.

The protein resides in the cytoplasm. The enzyme catalyses 7-phospho-2-dehydro-3-deoxy-D-arabino-heptonate = 3-dehydroquinate + phosphate. It catalyses the reaction 3-dehydroquinate = 3-dehydroshikimate + H2O. The catalysed reaction is shikimate + NADP(+) = 3-dehydroshikimate + NADPH + H(+). It carries out the reaction shikimate + ATP = 3-phosphoshikimate + ADP + H(+). The enzyme catalyses 3-phosphoshikimate + phosphoenolpyruvate = 5-O-(1-carboxyvinyl)-3-phosphoshikimate + phosphate. It participates in metabolic intermediate biosynthesis; chorismate biosynthesis; chorismate from D-erythrose 4-phosphate and phosphoenolpyruvate: step 2/7. The protein operates within metabolic intermediate biosynthesis; chorismate biosynthesis; chorismate from D-erythrose 4-phosphate and phosphoenolpyruvate: step 3/7. Its pathway is metabolic intermediate biosynthesis; chorismate biosynthesis; chorismate from D-erythrose 4-phosphate and phosphoenolpyruvate: step 4/7. It functions in the pathway metabolic intermediate biosynthesis; chorismate biosynthesis; chorismate from D-erythrose 4-phosphate and phosphoenolpyruvate: step 5/7. It participates in metabolic intermediate biosynthesis; chorismate biosynthesis; chorismate from D-erythrose 4-phosphate and phosphoenolpyruvate: step 6/7. Its function is as follows. The AROM polypeptide catalyzes 5 consecutive enzymatic reactions in prechorismate polyaromatic amino acid biosynthesis. The chain is Pentafunctional AROM polypeptide from Fusarium vanettenii (strain ATCC MYA-4622 / CBS 123669 / FGSC 9596 / NRRL 45880 / 77-13-4) (Fusarium solani subsp. pisi).